The following is a 365-amino-acid chain: Peptide chain release factor 2 (365 aa).

Residue Gln251 is modified to N5-methylglutamine.

The protein belongs to the prokaryotic/mitochondrial release factor family. In terms of processing, methylated by PrmC. Methylation increases the termination efficiency of RF2.

The protein resides in the cytoplasm. In terms of biological role, peptide chain release factor 2 directs the termination of translation in response to the peptide chain termination codons UGA and UAA. This Campylobacter jejuni subsp. jejuni serotype O:23/36 (strain 81-176) protein is Peptide chain release factor 2.